We begin with the raw amino-acid sequence, 272 residues long: Putative pyruvate, phosphate dikinase regulatory protein (272 aa).

154-161 (GVSRTSKS) lines the ADP pocket.

The protein belongs to the pyruvate, phosphate/water dikinase regulatory protein family. PDRP subfamily.

It carries out the reaction N(tele)-phospho-L-histidyl/L-threonyl-[pyruvate, phosphate dikinase] + ADP = N(tele)-phospho-L-histidyl/O-phospho-L-threonyl-[pyruvate, phosphate dikinase] + AMP + H(+). It catalyses the reaction N(tele)-phospho-L-histidyl/O-phospho-L-threonyl-[pyruvate, phosphate dikinase] + phosphate + H(+) = N(tele)-phospho-L-histidyl/L-threonyl-[pyruvate, phosphate dikinase] + diphosphate. In terms of biological role, bifunctional serine/threonine kinase and phosphorylase involved in the regulation of the pyruvate, phosphate dikinase (PPDK) by catalyzing its phosphorylation/dephosphorylation. This is Putative pyruvate, phosphate dikinase regulatory protein from Wolbachia sp. subsp. Brugia malayi (strain TRS).